We begin with the raw amino-acid sequence, 3788 residues long: Lysosomal-trafficking regulator (3788 aa).

2 disordered regions span residues lysine 148–serine 180 and glutamate 198–aspartate 217. Position 164 is a phosphoserine (serine 164). Phosphothreonine is present on threonine 165. A Phosphoserine modification is found at serine 166. The stretch at glycine 662–valine 700 is one WD 1 repeat. 3 disordered regions span residues leucine 1169–glutamate 1196, glycine 1213–glycine 1240, and glutamate 1482–isoleucine 1519. A compositionally biased stretch (acidic residues) spans glycine 1213–valine 1232. Phosphoserine is present on residues serine 1503 and serine 1504. A WD 2 repeat occupies serine 1576 to isoleucine 1620. Phosphoserine is present on residues serine 2099, serine 2118, serine 2203, serine 2207, and serine 2254. Positions alanine 2177–lysine 2221 are disordered. Over residues alanine 2190 to aspartate 2205 the composition is skewed to basic and acidic residues. Disordered regions lie at residues histidine 2556–glycine 2581 and asparagine 2659–glutamine 2681. The span at serine 2566–serine 2578 shows a compositional bias: basic residues. A compositionally biased stretch (polar residues) spans asparagine 2659–glutamate 2671. The BEACH-type PH domain maps to alanine 2996–leucine 3102. The BEACH domain occupies glutamine 3126–arginine 3409. WD repeat units lie at residues serine 3550–serine 3589, glycine 3601–serine 3640, glycine 3643–valine 3686, histidine 3687–glutamate 3731, and lysine 3736–leucine 3775.

Interacts with CPAP, LIP8 and ZNF521. As to expression, expressed in the heart, lung, liver, spleen, brain and in different immune cell types (purified B and T lymphocytes, bone marrow-derived macrophages and dendritic cells).

Its subcellular location is the cytoplasm. In terms of biological role, adapter protein that regulates and/or fission of intracellular vesicles such as lysosomes. Might regulate trafficking of effectors involved in exocytosis. In cytotoxic T-cells and natural killer (NK) cells, has role in the regulation of size, number and exocytosis of lytic granules. In macrophages and dendritic cells, regulates phagosome maturation by controlling the conversion of early phagosomal compartments into late phagosomes. In macrophages and dendritic cells, specifically involved in TLR3- and TLR4-induced production of pro-inflammatory cytokines by regulating the endosomal TLR3- TICAM1/TRIF and TLR4- TICAM1/TRIF signaling pathways. This Mus musculus (Mouse) protein is Lysosomal-trafficking regulator (Lyst).